We begin with the raw amino-acid sequence, 61 residues long: uncharacterized protein (61 aa).

A coiled-coil region spans residues 10–61 (YEEENDNEDFEEEVELSREDLNQIINELAPFLIKLLTDLTELTQKKEESENE).

This is an uncharacterized protein from Acidianus bottle-shaped virus (isolate Italy/Pozzuoli) (ABV).